We begin with the raw amino-acid sequence, 330 residues long: Ferredoxin--NADP reductase (330 aa).

E35, Q43, Y48, V90, F123, D285, and T326 together coordinate FAD.

Belongs to the ferredoxin--NADP reductase type 2 family. As to quaternary structure, homodimer. The cofactor is FAD.

The enzyme catalyses 2 reduced [2Fe-2S]-[ferredoxin] + NADP(+) + H(+) = 2 oxidized [2Fe-2S]-[ferredoxin] + NADPH. The sequence is that of Ferredoxin--NADP reductase from Streptococcus pyogenes serotype M2 (strain MGAS10270).